The following is a 130-amino-acid chain: Protein MGF 360-1L (130 aa).

3 helical membrane passes run 4-24, 75-95, and 109-129; these read FLGFLLLSYLAIILVHDNVNC, IIRHCCFYLVFSIAFASCVAF, and LLGLLSILVWLAQPVLNQPFP.

It belongs to the asfivirus MGF 110 family.

The protein localises to the host membrane. In terms of biological role, plays a role in virus cell tropism, and may be required for efficient virus replication in macrophages. The protein is Protein MGF 360-1L of Ornithodoros (relapsing fever ticks).